The following is a 245-amino-acid chain: NADH-quinone oxidoreductase subunit C (245 aa).

The segment covering 1-10 (MNAPQDRTDD) has biased composition (basic and acidic residues). Disordered stretches follow at residues 1–54 (MNAP…GYGG) and 217–245 (QRKD…RSYQ). Positions 11-28 (GGVPVPVTPAGATGGAPA) are enriched in low complexity. A compositionally biased stretch (gly residues) spans 39–54 (GMFGDQGTGDVSGYGG).

This sequence belongs to the complex I 30 kDa subunit family. As to quaternary structure, NDH-1 is composed of 14 different subunits. Subunits NuoB, C, D, E, F, and G constitute the peripheral sector of the complex.

It is found in the cell membrane. The catalysed reaction is a quinone + NADH + 5 H(+)(in) = a quinol + NAD(+) + 4 H(+)(out). Functionally, NDH-1 shuttles electrons from NADH, via FMN and iron-sulfur (Fe-S) centers, to quinones in the respiratory chain. The immediate electron acceptor for the enzyme in this species is believed to be a menaquinone. Couples the redox reaction to proton translocation (for every two electrons transferred, four hydrogen ions are translocated across the cytoplasmic membrane), and thus conserves the redox energy in a proton gradient. This chain is NADH-quinone oxidoreductase subunit C, found in Salinispora arenicola (strain CNS-205).